Reading from the N-terminus, the 117-residue chain is Large ribosomal subunit protein uL18 (117 aa).

It belongs to the universal ribosomal protein uL18 family. Part of the 50S ribosomal subunit; part of the 5S rRNA/L5/L18/L25 subcomplex. Contacts the 5S and 23S rRNAs.

Functionally, this is one of the proteins that bind and probably mediate the attachment of the 5S RNA into the large ribosomal subunit, where it forms part of the central protuberance. This is Large ribosomal subunit protein uL18 from Actinobacillus succinogenes (strain ATCC 55618 / DSM 22257 / CCUG 43843 / 130Z).